The sequence spans 338 residues: Aspartate carbamoyltransferase catalytic subunit (338 aa).

Positions 59 and 60 each coordinate carbamoyl phosphate. Position 87 (Lys87) interacts with L-aspartate. The carbamoyl phosphate site is built by Arg109, His142, and Gln145. L-aspartate is bound by residues Arg182 and Arg253. Gly294 and Pro295 together coordinate carbamoyl phosphate.

It belongs to the aspartate/ornithine carbamoyltransferase superfamily. ATCase family. In terms of assembly, heterododecamer (2C3:3R2) of six catalytic PyrB chains organized as two trimers (C3), and six regulatory PyrI chains organized as three dimers (R2).

The enzyme catalyses carbamoyl phosphate + L-aspartate = N-carbamoyl-L-aspartate + phosphate + H(+). It participates in pyrimidine metabolism; UMP biosynthesis via de novo pathway; (S)-dihydroorotate from bicarbonate: step 2/3. Functionally, catalyzes the condensation of carbamoyl phosphate and aspartate to form carbamoyl aspartate and inorganic phosphate, the committed step in the de novo pyrimidine nucleotide biosynthesis pathway. This is Aspartate carbamoyltransferase catalytic subunit from Prochlorococcus marinus (strain MIT 9515).